The chain runs to 397 residues: Phosphoglycerate kinase (397 aa).

Substrate contacts are provided by residues 26–28 (DLN), Arg-42, 65–68 (HLGR), Arg-119, and Arg-152. ATP is bound by residues Lys-203, Glu-325, and 351-354 (GGDT).

The protein belongs to the phosphoglycerate kinase family. In terms of assembly, monomer.

It is found in the cytoplasm. It catalyses the reaction (2R)-3-phosphoglycerate + ATP = (2R)-3-phospho-glyceroyl phosphate + ADP. It functions in the pathway carbohydrate degradation; glycolysis; pyruvate from D-glyceraldehyde 3-phosphate: step 2/5. The chain is Phosphoglycerate kinase from Bordetella pertussis (strain Tohama I / ATCC BAA-589 / NCTC 13251).